The following is a 495-amino-acid chain: ATP synthase subunit beta, chloroplastic (495 aa).

172–179 is an ATP binding site; it reads GGAGVGKT.

This sequence belongs to the ATPase alpha/beta chains family. In terms of assembly, F-type ATPases have 2 components, CF(1) - the catalytic core - and CF(0) - the membrane proton channel. CF(1) has five subunits: alpha(3), beta(3), gamma(1), delta(1), epsilon(1). CF(0) has four main subunits: a(1), b(1), b'(1) and c(9-12).

The protein localises to the plastid. Its subcellular location is the chloroplast thylakoid membrane. It catalyses the reaction ATP + H2O + 4 H(+)(in) = ADP + phosphate + 5 H(+)(out). Produces ATP from ADP in the presence of a proton gradient across the membrane. The catalytic sites are hosted primarily by the beta subunits. This is ATP synthase subunit beta, chloroplastic from Scilla messeniaca (Greek squill).